The sequence spans 76 residues: UPF0291 protein BC_1827 (76 aa).

This sequence belongs to the UPF0291 family.

Its subcellular location is the cytoplasm. This is UPF0291 protein BC_1827 from Bacillus cereus (strain ATCC 14579 / DSM 31 / CCUG 7414 / JCM 2152 / NBRC 15305 / NCIMB 9373 / NCTC 2599 / NRRL B-3711).